The sequence spans 568 residues: Proline--tRNA ligase (568 aa).

This sequence belongs to the class-II aminoacyl-tRNA synthetase family. ProS type 1 subfamily. In terms of assembly, homodimer.

The protein resides in the cytoplasm. The catalysed reaction is tRNA(Pro) + L-proline + ATP = L-prolyl-tRNA(Pro) + AMP + diphosphate. Functionally, catalyzes the attachment of proline to tRNA(Pro) in a two-step reaction: proline is first activated by ATP to form Pro-AMP and then transferred to the acceptor end of tRNA(Pro). As ProRS can inadvertently accommodate and process non-cognate amino acids such as alanine and cysteine, to avoid such errors it has two additional distinct editing activities against alanine. One activity is designated as 'pretransfer' editing and involves the tRNA(Pro)-independent hydrolysis of activated Ala-AMP. The other activity is designated 'posttransfer' editing and involves deacylation of mischarged Ala-tRNA(Pro). The misacylated Cys-tRNA(Pro) is not edited by ProRS. This Alkalilimnicola ehrlichii (strain ATCC BAA-1101 / DSM 17681 / MLHE-1) protein is Proline--tRNA ligase.